Consider the following 149-residue polypeptide: Large ribosomal subunit protein uL15 (149 aa).

Composition is skewed to basic residues over residues 1 to 13 (MPTRLTKTRKHRG) and 21 to 42 (RIGKHRKHPGGRGKAGGQHHHR). The disordered stretch occupies residues 1–44 (MPTRLTKTRKHRGNVSAGKGRIGKHRKHPGGRGKAGGQHHHRTN).

It belongs to the universal ribosomal protein uL15 family. In terms of assembly, component of the large ribosomal subunit. Mature ribosomes consist of a small (40S) and a large (60S) subunit. The 40S subunit contains about 32 different proteins and 1 molecule of RNA (18S). The 60S subunit contains 45 different proteins and 3 molecules of RNA (25S, 5.8S and 5S).

The protein resides in the cytoplasm. In terms of biological role, component of the ribosome, a large ribonucleoprotein complex responsible for the synthesis of proteins in the cell. The small ribosomal subunit (SSU) binds messenger RNAs (mRNAs) and translates the encoded message by selecting cognate aminoacyl-transfer RNA (tRNA) molecules. The large subunit (LSU) contains the ribosomal catalytic site termed the peptidyl transferase center (PTC), which catalyzes the formation of peptide bonds, thereby polymerizing the amino acids delivered by tRNAs into a polypeptide chain. The nascent polypeptides leave the ribosome through a tunnel in the LSU and interact with protein factors that function in enzymatic processing, targeting, and the membrane insertion of nascent chains at the exit of the ribosomal tunnel. The polypeptide is Large ribosomal subunit protein uL15 (Candida albicans (strain SC5314 / ATCC MYA-2876) (Yeast)).